Consider the following 206-residue polypeptide: High-affinity nitrate transporter-activating protein 2.1 (206 aa).

The signal sequence occupies residues 1-27; the sequence is MARLAGVAALSLVLVLLGAGVPRPAAA. A helical transmembrane segment spans residues 180-200; it reads VAAGVFSTFSIAALAFFFVVE.

The protein belongs to the NAR2 family. As to quaternary structure, heterotetramer composed of two NRT2.1, NRT2.2 or NRT2.3 and two NAR2.1. Interacts with NRT2.1, NRT2.2 and isoform 1 of NRT2.3. As to expression, expressed in epidermal cells of primary and lateral roots, root-shoot junction zone, vascular tissues of adventitious root primordia, stems and coleoptiles of germinating seeds.

It is found in the cell membrane. Its function is as follows. Acts as a dual component transporter with NTR2.1, NRT2.2 and NRT2.3. Required for high-affinity nitrate transport. Involved in the regulation of NRT2.1, NRT2.2 and NRT2.3 expression, and in both, HATS (high-affinity transport system) and LATS (low-affinity transport system) activities in plant roots. Imports nitrate with high affinity when expressed with NTR2.1, NTR2.2 or NTR2.3 in a heterologous system (Xenopus oocytes). The sequence is that of High-affinity nitrate transporter-activating protein 2.1 (NAR2.1) from Oryza sativa subsp. japonica (Rice).